The following is a 386-amino-acid chain: DNase toxin Tse7 (386 aa).

In terms of assembly, interacts with Tsi7.

The catalysed reaction is Endonucleolytic cleavage to 5'-phosphodinucleotide and 5'-phosphooligonucleotide end-products.. Functionally, type VI secretion exported toxin that via to its DNase activity induces growth arrest and ultimately DNA degradation within target cell. The activity is initially neutralized by a cognate immunity protein Tsi7. The sequence is that of DNase toxin Tse7 from Pseudomonas aeruginosa (strain ATCC 15692 / DSM 22644 / CIP 104116 / JCM 14847 / LMG 12228 / 1C / PRS 101 / PAO1).